Consider the following 185-residue polypeptide: Lactoylglutathione lyase (185 aa).

Residues 1–22 (MASEARESPANNPGLSTNRDEA) are disordered. Positions 27–174 (IMQQTMFRIK…DGYWIEIFDL (148 aa)) constitute a VOC domain. Substrate contacts are provided by glutamine 30 and arginine 34. Glutamine 30 serves as a coordination point for Zn(2+). Glutamate 96 lines the Zn(2+) pocket. Substrate-binding positions include asparagine 100, arginine 120, histidine 124, and 154 to 155 (KM). Histidine 124 serves as a coordination point for Zn(2+). Glutamate 170 contacts Zn(2+). The active-site Proton donor/acceptor is the glutamate 170.

Belongs to the glyoxalase I family. Zn(2+) serves as cofactor.

The catalysed reaction is (R)-S-lactoylglutathione = methylglyoxal + glutathione. It functions in the pathway secondary metabolite metabolism; methylglyoxal degradation; (R)-lactate from methylglyoxal: step 1/2. Functionally, catalyzes the conversion of hemimercaptal, formed from methylglyoxal and glutathione, to S-lactoylglutathione. The protein is Lactoylglutathione lyase of Arabidopsis thaliana (Mouse-ear cress).